Reading from the N-terminus, the 444-residue chain is MQHRDEILTPSQLNTLARDLLESAFPLVWIEGELGNVSRPSSGHLYVTLKDAQAQVRCAMFKPKSQWLTFQPREGLRVLARGRLTLYEARGDYQIVLDHLEEAGEGALRRAFEQLRIRLEAEGLFDPARKQPLPVHPRRIAVITSPSGAVIRDIFSVLMRRFPLVEIELLPSLVQGDTAAAQITHLLRCADSSGRYDAILIARGGGSLEDLWAFNNEQLARTIAAAHTPVISAIGHETDFTLADFAADIRAPTPSVAAELLVPDQRALRQHLGQLQQRLLHLQQHRLDQAIQRADQLGLRLQARNPEMHLRLLAQRQAEAGRRLEQCLHHVLDRAQGQLRNHHTRLYALNPRQQIAGLQQHLKHLNPQQPLQRRLQQEQLRLHGLVRALEAVNPLATVARGYALVHRADNNTLVRDSAQVCVGDVLDTKLAHGQLRVRVEVSST.

The protein belongs to the XseA family. Heterooligomer composed of large and small subunits.

It is found in the cytoplasm. It carries out the reaction Exonucleolytic cleavage in either 5'- to 3'- or 3'- to 5'-direction to yield nucleoside 5'-phosphates.. In terms of biological role, bidirectionally degrades single-stranded DNA into large acid-insoluble oligonucleotides, which are then degraded further into small acid-soluble oligonucleotides. The protein is Exodeoxyribonuclease 7 large subunit of Xylella fastidiosa (strain 9a5c).